The chain runs to 505 residues: Activin receptor type-1B (505 aa).

A signal peptide spans 1-23 (MAESAGASSFFPLVVLLLAGSGG). Over 24–126 (SGPRGVQALL…EHPSMWGPVE (103 aa)) the chain is Extracellular. Asn-43 is a glycosylation site (N-linked (GlcNAc...) asparagine). Residues 127–149 (LVGIIAGPVFLLFLIIIIVFLVI) traverse the membrane as a helical segment. Over 150-505 (NYHQRVYHNR…QLSVQEDVKI (356 aa)) the chain is Cytoplasmic. A GS domain is found at 177 to 206 (KTLQDLVYDLSTSGSGSGLPLFVQRTVART). The Protein kinase domain maps to 207–497 (IVLQEIIGKG…LRIKKTLSQL (291 aa)). Residues 213–221 (IGKGRFGEV) and Lys-234 each bind ATP. Catalysis depends on Asp-335, which acts as the Proton acceptor. Residue Tyr-380 is modified to Phosphotyrosine.

The protein belongs to the protein kinase superfamily. TKL Ser/Thr protein kinase family. TGFB receptor subfamily. In terms of assembly, forms an activin receptor complex with activin receptor type-2 (ACVR2A or ACVR2B). Part of a complex consisting of MAGI2/ARIP1, ACVR2A, ACVR1B and SMAD3. Interacts with SMAD2 and SMAD3. Interacts with SMAD7. Interacts with FKBP1A. Interacts with IGSF1. Interacts with CRIPTO. Interacts with TDP2. Interacts with TSC22D1/TSC-22. Requires Mg(2+) as cofactor. Mn(2+) is required as a cofactor. Post-translationally, autophosphorylated. Phosphorylated by activin receptor type-2 (ACVR2A or ACVR2B) in response to activin-binding at serine and threonine residues in the GS domain. Phosphorylation of ACVR1B by activin receptor type-2 regulates association with SMAD7. Ubiquitinated. Level of ubiquitination is regulated by the SMAD7-SMURF1 complex. In terms of processing, ubiquitinated. As to expression, expressed in many tissues, most strongly in kidney, pancreas, brain, lung, and liver.

The protein localises to the cell membrane. The enzyme catalyses L-threonyl-[receptor-protein] + ATP = O-phospho-L-threonyl-[receptor-protein] + ADP + H(+). It catalyses the reaction L-seryl-[receptor-protein] + ATP = O-phospho-L-seryl-[receptor-protein] + ADP + H(+). Its activity is regulated as follows. Activin receptor type-2 (ACVR2A or ACVR2B) activates the type-1 receptor through phosphorylation of its regulatory GS domain. In terms of biological role, transmembrane serine/threonine kinase activin type-1 receptor forming an activin receptor complex with activin receptor type-2 (ACVR2A or ACVR2B). Transduces the activin signal from the cell surface to the cytoplasm and is thus regulating a many physiological and pathological processes including neuronal differentiation and neuronal survival, hair follicle development and cycling, FSH production by the pituitary gland, wound healing, extracellular matrix production, immunosuppression and carcinogenesis. Activin is also thought to have a paracrine or autocrine role in follicular development in the ovary. Within the receptor complex, type-2 receptors (ACVR2A and/or ACVR2B) act as a primary activin receptors whereas the type-1 receptors like ACVR1B act as downstream transducers of activin signals. Activin binds to type-2 receptor at the plasma membrane and activates its serine-threonine kinase. The activated receptor type-2 then phosphorylates and activates the type-1 receptor such as ACVR1B. Once activated, the type-1 receptor binds and phosphorylates the SMAD proteins SMAD2 and SMAD3, on serine residues of the C-terminal tail. Soon after their association with the activin receptor and subsequent phosphorylation, SMAD2 and SMAD3 are released into the cytoplasm where they interact with the common partner SMAD4. This SMAD complex translocates into the nucleus where it mediates activin-induced transcription. Inhibitory SMAD7, which is recruited to ACVR1B through FKBP1A, can prevent the association of SMAD2 and SMAD3 with the activin receptor complex, thereby blocking the activin signal. Activin signal transduction is also antagonized by the binding to the receptor of inhibin-B via the IGSF1 inhibin coreceptor. ACVR1B also phosphorylates TDP2. This chain is Activin receptor type-1B (ACVR1B), found in Homo sapiens (Human).